The following is a 240-amino-acid chain: Large ribosomal subunit protein uL2 (240 aa).

The span at 1 to 11 (MGKRLISQNRG) shows a compositional bias: polar residues. Disordered stretches follow at residues 1 to 28 (MGKRLISQNRGRGTPKYRSPTHKRKGAV) and 206 to 240 (GGGRHQHLGKPSSVSRHTSPGRKVGHIASRRTGRK). Basic residues-rich tracts occupy residues 13–28 (GTPKYRSPTHKRKGAV) and 224–240 (SPGRKVGHIASRRTGRK).

Belongs to the universal ribosomal protein uL2 family. Part of the 50S ribosomal subunit. Forms a bridge to the 30S subunit in the 70S ribosome.

In terms of biological role, one of the primary rRNA binding proteins. Required for association of the 30S and 50S subunits to form the 70S ribosome, for tRNA binding and peptide bond formation. It has been suggested to have peptidyltransferase activity; this is somewhat controversial. Makes several contacts with the 16S rRNA in the 70S ribosome. The chain is Large ribosomal subunit protein uL2 from Methanococcus maripaludis (strain C7 / ATCC BAA-1331).